A 481-amino-acid polypeptide reads, in one-letter code: Glutamyl-tRNA(Gln) amidotransferase subunit A (481 aa).

Residues K75 and S150 each act as charge relay system in the active site. Catalysis depends on S174, which acts as the Acyl-ester intermediate.

It belongs to the amidase family. GatA subfamily. As to quaternary structure, heterotrimer of A, B and C subunits.

The catalysed reaction is L-glutamyl-tRNA(Gln) + L-glutamine + ATP + H2O = L-glutaminyl-tRNA(Gln) + L-glutamate + ADP + phosphate + H(+). Allows the formation of correctly charged Gln-tRNA(Gln) through the transamidation of misacylated Glu-tRNA(Gln) in organisms which lack glutaminyl-tRNA synthetase. The reaction takes place in the presence of glutamine and ATP through an activated gamma-phospho-Glu-tRNA(Gln). This Macrococcus caseolyticus (strain JCSC5402) (Macrococcoides caseolyticum) protein is Glutamyl-tRNA(Gln) amidotransferase subunit A.